We begin with the raw amino-acid sequence, 132 residues long: Large ribosomal subunit protein bL19 (132 aa).

This sequence belongs to the bacterial ribosomal protein bL19 family.

Its function is as follows. This protein is located at the 30S-50S ribosomal subunit interface and may play a role in the structure and function of the aminoacyl-tRNA binding site. The chain is Large ribosomal subunit protein bL19 from Nitrosomonas europaea (strain ATCC 19718 / CIP 103999 / KCTC 2705 / NBRC 14298).